The chain runs to 101 residues: Integration host factor subunit beta (101 aa).

Residues 62–84 (RNPKTGESVALPGKHVPHFKPGK) form a disordered region.

Belongs to the bacterial histone-like protein family. In terms of assembly, heterodimer of an alpha and a beta chain.

Functionally, this protein is one of the two subunits of integration host factor, a specific DNA-binding protein that functions in genetic recombination as well as in transcriptional and translational control. The polypeptide is Integration host factor subunit beta (Stenotrophomonas maltophilia (strain K279a)).